We begin with the raw amino-acid sequence, 1073 residues long: PX domain-containing protein LEC1 (1073 aa).

The segment covering 218–228 (CTESVDNDKSS) has biased composition (basic and acidic residues). A disordered region spans residues 218-240 (CTESVDNDKSSKSTPTSSPKSHA). Residues 229-238 (KSTPTSSPKS) are compositionally biased toward low complexity. Residues 273-506 (LFSKLSLGVP…RFFLSGPNLD (234 aa)) enclose the PX domain. Phosphoserine occurs at positions 310 and 451. The interval 431–456 (IKEEDNIDEDEYEEEGEGEESDFDEY) is disordered. Positions 432–453 (KEEDNIDEDEYEEEGEGEESDF) are enriched in acidic residues.

It is found in the endoplasmic reticulum membrane. Its subcellular location is the lipid droplet. Functionally, phosphoinositide-binding protein that plays a role in regulation of ergosterol distribution in the cell. Facilitates ergosterol transport between plasma membrane and lipid droplets. This is PX domain-containing protein LEC1 from Saccharomyces cerevisiae (strain ATCC 204508 / S288c) (Baker's yeast).